The following is a 201-amino-acid chain: Adenylyl-sulfate kinase (201 aa).

Position 35–42 (35–42 (GLSGSGKS)) interacts with ATP. S109 acts as the Phosphoserine intermediate in catalysis.

This sequence belongs to the APS kinase family.

It carries out the reaction adenosine 5'-phosphosulfate + ATP = 3'-phosphoadenylyl sulfate + ADP + H(+). Its pathway is sulfur metabolism; hydrogen sulfide biosynthesis; sulfite from sulfate: step 2/3. Functionally, catalyzes the synthesis of activated sulfate. This is Adenylyl-sulfate kinase from Shigella boydii serotype 18 (strain CDC 3083-94 / BS512).